The sequence spans 211 residues: Glutathione S-transferase class-mu 28 kDa isozyme (211 aa).

One can recognise a GST N-terminal domain in the interval 4–86 (DHIKVIYFNG…YMAKKHHMMG (83 aa)). Residues tyrosine 10, arginine 16, tryptophan 41, lysine 45, leucine 53, glutamate 70, serine 71, and aspartate 104 each contribute to the glutathione site. Positions 88–211 (TEEEYYNVEK…YLSDRAATPF (124 aa)) constitute a GST C-terminal domain.

This sequence belongs to the GST superfamily. Mu family. In terms of assembly, homodimer.

The enzyme catalyses RX + glutathione = an S-substituted glutathione + a halide anion + H(+). Conjugation of reduced glutathione to a wide number of exogenous and endogenous hydrophobic electrophiles. Its function is as follows. GST isoenzymes appear to play a central role in the parasite detoxification system. Other functions are also suspected including a role in increasing the solubility of haematin in the parasite gut. The sequence is that of Glutathione S-transferase class-mu 28 kDa isozyme from Schistosoma haematobium (Blood fluke).